The primary structure comprises 251 residues: Small ribosomal subunit protein uS2B (251 aa).

The residue at position 2 (S2) is an N-acetylserine. The span at A214–E225 shows a compositional bias: low complexity. The segment at A214–W251 is disordered. Positions E226–W251 are enriched in acidic residues.

The protein belongs to the universal ribosomal protein uS2 family. As to quaternary structure, component of the small ribosomal subunit. Mature ribosomes consist of a small (40S) and a large (60S) subunit. The 40S subunit contains about 33 different proteins and 1 molecule of RNA (18S). The 60S subunit contains about 49 different proteins and 3 molecules of RNA (25S, 5.8S and 5S). Interacts with RPS21.

The protein resides in the cytoplasm. Functionally, required for the assembly and/or stability of the 40S ribosomal subunit. Required for the processing of the 20S rRNA-precursor to mature 18S rRNA in a late step of the maturation of 40S ribosomal subunits. In Vanderwaltozyma polyspora (strain ATCC 22028 / DSM 70294 / BCRC 21397 / CBS 2163 / NBRC 10782 / NRRL Y-8283 / UCD 57-17) (Kluyveromyces polysporus), this protein is Small ribosomal subunit protein uS2B.